The chain runs to 603 residues: Insulin-like growth factor-binding protein complex acid labile subunit (603 aa).

Positions 1-23 are cleaved as a signal peptide; it reads MALRTGSPALVVLLAFWVALGPC. The 43-residue stretch at 32 to 74 folds into the LRRNT domain; sequence ASADAEGPQCPVTCTCSYDDYTDELSVFCSSRNLTQLPDGIPV. 2 disulfide bridges follow: C41/C47 and C45/C60. 3 N-linked (GlcNAc...) asparagine glycosylation sites follow: N64, N85, and N96. LRR repeat units follow at residues 75–96, 99–120, 123–144, 147–168, 171–192, 195–216, 219–240, 243–264, 267–288, 291–312, 315–336, 339–360, 363–384, 387–408, 411–432, 435–456, 459–480, 483–504, and 507–528; these read STRALWLDGNNLSSIPSAAFQN, SLDFLNLQGSWLRSLEPQALLG, NLYHLHLERNLLRSLAAGLFRH, SLASLSLGNNLLGRLEEGLFRG, HLWDLNLGWNSLVVLPDTVFQG, NLHELVLAGNKLTYLQPALLCG, ELRELDLSRNALRSVKANVFIH, RLQKLYLDRNLITAVAPRAFLG, ALRWLDLSHNRVAGLLEDTFPG, GLHVLRLAHNAITSLRPRTFKD, FLEELQLGHNRIRQLGEKTFEG, QLEVLTLNDNQIHEVKVGAFFG, NVAVMNLSGNCLRSLPEHVFQG, RLHSLHLEHSCLGRIRLHTFAG, GLRRLFLRDNSISSIEEQSLAG, ELLELDLTANQLTHLPRQLFQG, QLEYLLLSNNQLTMLSEDVLGP, RAFWLDLSHNRLETPAEGLFSS, and RLRYLNLRNNSLQTFVPQPGLE. N368 is a glycosylation site (N-linked (GlcNAc...) asparagine). The N-linked (GlcNAc...) asparagine glycan is linked to N515. One can recognise an LRRCT domain in the interval 535–603; that stretch reads NPWDCSCPLK…DISETLFVHC (69 aa). Intrachain disulfides connect C539–C581, C541–C603, and C565–C570. N578 and N586 each carry an N-linked (GlcNAc...) asparagine glycan.

Forms a ternary complex with IGF1 and IGFBP3.

Its subcellular location is the secreted. The protein localises to the extracellular space. Functionally, may have an important role in regulating the access of circulating IGFs to the tissues. This is Insulin-like growth factor-binding protein complex acid labile subunit (Igfals) from Mus musculus (Mouse).